The sequence spans 481 residues: Aspartyl/glutamyl-tRNA(Asn/Gln) amidotransferase subunit B (481 aa).

It belongs to the GatB/GatE family. GatB subfamily. As to quaternary structure, heterotrimer of A, B and C subunits.

It carries out the reaction L-glutamyl-tRNA(Gln) + L-glutamine + ATP + H2O = L-glutaminyl-tRNA(Gln) + L-glutamate + ADP + phosphate + H(+). The enzyme catalyses L-aspartyl-tRNA(Asn) + L-glutamine + ATP + H2O = L-asparaginyl-tRNA(Asn) + L-glutamate + ADP + phosphate + 2 H(+). Functionally, allows the formation of correctly charged Asn-tRNA(Asn) or Gln-tRNA(Gln) through the transamidation of misacylated Asp-tRNA(Asn) or Glu-tRNA(Gln) in organisms which lack either or both of asparaginyl-tRNA or glutaminyl-tRNA synthetases. The reaction takes place in the presence of glutamine and ATP through an activated phospho-Asp-tRNA(Asn) or phospho-Glu-tRNA(Gln). The protein is Aspartyl/glutamyl-tRNA(Asn/Gln) amidotransferase subunit B of Pseudomonas paraeruginosa (strain DSM 24068 / PA7) (Pseudomonas aeruginosa (strain PA7)).